The chain runs to 89 residues: Acyl carrier protein MbtL (89 aa).

The region spanning 8–83 (NHVSAELLGI…DLQAAIAAEP (76 aa)) is the Carrier domain. Residue Ser43 is modified to O-(pantetheine 4'-phosphoryl)serine.

In terms of processing, 4'-phosphopantetheine is transferred from CoA to a specific serine of apo-ACP, leading to the activated holo-ACP form.

Its subcellular location is the cytoplasm. The protein operates within siderophore biosynthesis; mycobactin biosynthesis. Its function is as follows. Acyl carrier protein involved in the formation of acyl-S-ACP intermediates within the mycobactin biosynthesis process. The protein is Acyl carrier protein MbtL (mbtL) of Mycolicibacterium paratuberculosis (strain ATCC BAA-968 / K-10) (Mycobacterium paratuberculosis).